Reading from the N-terminus, the 368-residue chain is D-alanine--D-alanine ligase (368 aa).

Positions 151 to 358 (KKLLAAEGLP…YGTLVSTLVD (208 aa)) constitute an ATP-grasp domain. Position 179–234 (179–234 (KSRLHLPVFVKPARGGSSIGITRVAEWAALDDAIAHARLHDPKVIVESGIIGREVE)) interacts with ATP. The Mg(2+) site is built by aspartate 313, glutamate 325, and asparagine 327.

This sequence belongs to the D-alanine--D-alanine ligase family. The cofactor is Mg(2+). Mn(2+) serves as cofactor.

It is found in the cytoplasm. The catalysed reaction is 2 D-alanine + ATP = D-alanyl-D-alanine + ADP + phosphate + H(+). Its pathway is cell wall biogenesis; peptidoglycan biosynthesis. Functionally, cell wall formation. This Rhodococcus jostii (strain RHA1) protein is D-alanine--D-alanine ligase.